The sequence spans 317 residues: Transcription factor EC (317 aa).

The tract at residues 1 to 90 is necessary for transcriptional transactivation; the sequence is MTFDCRVCDQ…GLTDAPCPSI (90 aa). The 54-residue stretch at 110–163 folds into the bHLH domain; it reads QKKDNHNLIERRRRYNINYRIKELGTLIPKSNDPDMRWNKGTILKASVDYIKWL. The interval 242 to 317 is necessary for transcriptional transactivation; the sequence is TSPEFYEQAV…SLSSEDGDEL (76 aa).

This sequence belongs to the MiT/TFE family. As to quaternary structure, homodimer. Forms heterodimers with MITF. Interacts with MITF. Forms heterodimers with TFE3. In terms of tissue distribution, expressed in osteoclast-like cells (at protein level). Expressed in cells of the mononuclear phagocyte lineage. Expressed in macrophages and in osteoclast-like cells.

The protein localises to the nucleus. Its function is as follows. Transcriptional regulator that acts as a repressor or an activator. Acts as a transcriptional transactivator on the proximal promoter region of the tartrate-resistant acid phosphatase (TRAP) E-box containing promoter. Collaborates with MITF in target gene activation. Acts as a transcriptional repressor on minimal promoter containing element F (that includes an E-box sequence). Binds to element F in an E-box sequence-specific manner. Acts as a transcriptional repressor on minimal promoter containing mu E3 enhancer sequence. Binds to mu E3 DNA sequence of the immunoglobulin heavy-chain gene enhancer. Binds DNA in a homo- or heterodimeric form. The chain is Transcription factor EC (Tfec) from Mus musculus (Mouse).